The sequence spans 200 residues: 6,7-dimethyl-8-ribityllumazine synthase (200 aa).

Residues W25, 59–61, and 119–121 contribute to the 5-amino-6-(D-ribitylamino)uracil site; these read SWE and VLI. 124 to 125 serves as a coordination point for (2S)-2-hydroxy-3-oxobutyl phosphate; that stretch reads ET. H127 (proton donor) is an active-site residue. A 5-amino-6-(D-ribitylamino)uracil-binding site is contributed by F152. Position 166 (R166) interacts with (2S)-2-hydroxy-3-oxobutyl phosphate.

The protein belongs to the DMRL synthase family. Homopentamer.

The enzyme catalyses (2S)-2-hydroxy-3-oxobutyl phosphate + 5-amino-6-(D-ribitylamino)uracil = 6,7-dimethyl-8-(1-D-ribityl)lumazine + phosphate + 2 H2O + H(+). Its pathway is cofactor biosynthesis; riboflavin biosynthesis; riboflavin from 2-hydroxy-3-oxobutyl phosphate and 5-amino-6-(D-ribitylamino)uracil: step 1/2. Functionally, catalyzes the formation of 6,7-dimethyl-8-ribityllumazine by condensation of 5-amino-6-(D-ribitylamino)uracil with 3,4-dihydroxy-2-butanone 4-phosphate. This is the penultimate step in the biosynthesis of riboflavin. This is 6,7-dimethyl-8-ribityllumazine synthase from Pyricularia oryzae (strain 70-15 / ATCC MYA-4617 / FGSC 8958) (Rice blast fungus).